The chain runs to 352 residues: tRNA (guanine-N(1)-)-methyltransferase (352 aa).

S-adenosyl-L-methionine contacts are provided by residues Gly109 and 129–134; that span reads IGDYVL.

It belongs to the RNA methyltransferase TrmD family. Homodimer.

Its subcellular location is the cytoplasm. The enzyme catalyses guanosine(37) in tRNA + S-adenosyl-L-methionine = N(1)-methylguanosine(37) in tRNA + S-adenosyl-L-homocysteine + H(+). Its function is as follows. Specifically methylates guanosine-37 in various tRNAs. The protein is tRNA (guanine-N(1)-)-methyltransferase of Chlamydia trachomatis serovar A (strain ATCC VR-571B / DSM 19440 / HAR-13).